A 345-amino-acid polypeptide reads, in one-letter code: Phosphoribosylformylglycinamidine cyclo-ligase (345 aa).

The protein belongs to the AIR synthase family.

The protein localises to the cytoplasm. The enzyme catalyses 2-formamido-N(1)-(5-O-phospho-beta-D-ribosyl)acetamidine + ATP = 5-amino-1-(5-phospho-beta-D-ribosyl)imidazole + ADP + phosphate + H(+). Its pathway is purine metabolism; IMP biosynthesis via de novo pathway; 5-amino-1-(5-phospho-D-ribosyl)imidazole from N(2)-formyl-N(1)-(5-phospho-D-ribosyl)glycinamide: step 2/2. This is Phosphoribosylformylglycinamidine cyclo-ligase from Shouchella clausii (strain KSM-K16) (Alkalihalobacillus clausii).